Reading from the N-terminus, the 77-residue chain is U8-lycotoxin-Ls1m (77 aa).

The first 20 residues, 1–20 (MKLMIFTGLVLFAIVRLIEA), serve as a signal peptide directing secretion. The propeptide occupies 21-26 (QAENEK).

The protein belongs to the neurotoxin 19 (CSTX) family. 08 (U8-Lctx) subfamily. Contains 4 disulfide bonds. In terms of tissue distribution, expressed by the venom gland.

The protein localises to the secreted. The sequence is that of U8-lycotoxin-Ls1m from Lycosa singoriensis (Wolf spider).